Here is a 113-residue protein sequence, read N- to C-terminus: UPF0342 protein SPy_0811/M5005_Spy0626 (113 aa).

This sequence belongs to the UPF0342 family.

The polypeptide is UPF0342 protein SPy_0811/M5005_Spy0626 (Streptococcus pyogenes serotype M1).